The sequence spans 483 residues: Keratin, type II cytoskeletal 7 (483 aa).

Position 2 is an N-acetylserine (S2). Phosphoserine occurs at positions 2, 6, and 7. Residues 2–107 (SVQFSSQTFS…DPQIQQVRKE (106 aa)) are head. S12 carries an O-linked (GlcNAc) serine glycan. The segment at 14-37 (SAAFPRRGGQGRLSSVSSRAGSVS) is disordered. Position 20 is a dimethylated arginine; alternate (R20). Omega-N-methylarginine; alternate is present on R20. Residues 25 to 37 (RLSSVSSRAGSVS) show a composition bias toward low complexity. A phosphoserine mark is found at S63 and S88. Positions 107–143 (EEREQIKTLNNKFASFIDKVRFLEQQNQMLETKWRLL) are coil 1A. One can recognise an IF rod domain in the interval 108-420 (EREQIKTLNN…KLLEGEESRL (313 aa)). Phosphothreonine is present on T114. The interval 144–161 (QEQKSSKGSSLPAIFEAH) is linker 1. A Glycyl lysine isopeptide (Lys-Gly) (interchain with G-Cter in SUMO2) cross-link involves residue K147. The coil 1B stretch occupies residues 162–253 (IANLRRQLDG…TLYEMELNEL (92 aa)). Residue K196 is modified to N6-acetyllysine. Positions 254 to 277 (QTQISDTSVVLSMDNSRSLDLDSI) are linker 12. Phosphoserine occurs at positions 269 and 271. Residues 278–416 (ISEVKAQYED…ATYRKLLEGE (139 aa)) form a coil 2 region. Glycyl lysine isopeptide (Lys-Gly) (interchain with G-Cter in SUMO2) cross-links involve residues K282 and K303. T306 carries the phosphothreonine modification. Glycyl lysine isopeptide (Lys-Gly) (interchain with G-Cter in SUMO2) cross-links involve residues K313 and K348. The interval 417 to 483 (ESRLSGDGVG…TSSSRRSVRN (67 aa)) is tail.

The protein belongs to the intermediate filament family. Heterotetramer of two type I and two type II keratins. Interacts with eukaryotic translation initiator factor 3 (eIF3) subunit EIF3S10. Interacts with GPER1. Post-translationally, arg-20 is dimethylated, probably to asymmetric dimethylarginine.

Its function is as follows. Blocks interferon-dependent interphase and stimulates DNA synthesis in cells. This is Keratin, type II cytoskeletal 7 from Potorous tridactylus (Potoroo).